Reading from the N-terminus, the 339-residue chain is AB hydrolase superfamily protein B1A11.02 (339 aa).

Belongs to the AB hydrolase superfamily.

The polypeptide is AB hydrolase superfamily protein B1A11.02 (Schizosaccharomyces pombe (strain 972 / ATCC 24843) (Fission yeast)).